Here is a 188-residue protein sequence, read N- to C-terminus: Protein GrpE (188 aa).

Belongs to the GrpE family. In terms of assembly, homodimer.

It is found in the cytoplasm. Its function is as follows. Participates actively in the response to hyperosmotic and heat shock by preventing the aggregation of stress-denatured proteins, in association with DnaK and GrpE. It is the nucleotide exchange factor for DnaK and may function as a thermosensor. Unfolded proteins bind initially to DnaJ; upon interaction with the DnaJ-bound protein, DnaK hydrolyzes its bound ATP, resulting in the formation of a stable complex. GrpE releases ADP from DnaK; ATP binding to DnaK triggers the release of the substrate protein, thus completing the reaction cycle. Several rounds of ATP-dependent interactions between DnaJ, DnaK and GrpE are required for fully efficient folding. This is Protein GrpE from Chromobacterium violaceum (strain ATCC 12472 / DSM 30191 / JCM 1249 / CCUG 213 / NBRC 12614 / NCIMB 9131 / NCTC 9757 / MK).